The following is a 425-amino-acid chain: E3 ubiquitin-protein ligase GW2 (425 aa).

The RING-type; degenerate zinc finger occupies 62-105 (CPICFLYYPSLNRSKCCSKGICTECFLQMKPTHTAQPTQCPFCK).

In terms of tissue distribution, expressed in roots, shoots, leaves, inflorescence meristems, stamens, pistils, spikelet hulls and endosperms 4 days after fertilization.

The protein localises to the cytoplasm. It catalyses the reaction S-ubiquitinyl-[E2 ubiquitin-conjugating enzyme]-L-cysteine + [acceptor protein]-L-lysine = [E2 ubiquitin-conjugating enzyme]-L-cysteine + N(6)-ubiquitinyl-[acceptor protein]-L-lysine.. It functions in the pathway protein modification; protein ubiquitination. E3 ubiquitin-protein ligase involved in the regulation of grain size. May limit grain width and weight by restricting cell proliferation of the spikelet hull. Possesses E3 ubiquitin-protein ligase activity in vitro. This Oryza sativa subsp. indica (Rice) protein is E3 ubiquitin-protein ligase GW2.